The following is a 713-amino-acid chain: Cytosolic endo-beta-N-acetylglucosaminidase (713 aa).

Positions 1-36 are disordered; it reads MIARKRKSNGSETTSGKIPKDDVSSESCLDQPADES. Positions 270–362 constitute a BRCT domain; sequence FFDACDGFFT…DFRQNQDKFW (93 aa).

This sequence belongs to the glycosyl hydrolase 85 family.

The protein localises to the cytoplasm. The protein resides in the cytosol. It catalyses the reaction an N(4)-(oligosaccharide-(1-&gt;3)-[oligosaccharide-(1-&gt;6)]-beta-D-Man-(1-&gt;4)-beta-D-GlcNAc-(1-&gt;4)-alpha-D-GlcNAc)-L-asparaginyl-[protein] + H2O = an oligosaccharide-(1-&gt;3)-[oligosaccharide-(1-&gt;6)]-beta-D-Man-(1-&gt;4)-D-GlcNAc + N(4)-(N-acetyl-beta-D-glucosaminyl)-L-asparaginyl-[protein]. Functionally, endoglycosidase that releases N-glycans from glycoproteins by cleaving the beta-1,4-glycosidic bond in the N,N'-diacetylchitobiose core. Involved in the processing of free oligosaccharides in the cytosol. This is Cytosolic endo-beta-N-acetylglucosaminidase (engase) from Danio rerio (Zebrafish).